Consider the following 64-residue polypeptide: Frontoxin IV (64 aa).

5 disulfide bridges follow: C3–C24, C6–C11, C17–C41, C45–C57, and C58–C63.

In terms of tissue distribution, expressed by the venom gland.

It localises to the secreted. Produces peripheral paralysis by blocking neuromuscular transmission at the postsynaptic site. Binds to the muscular nicotinic acetylcholine receptor (nAChR). The sequence is that of Frontoxin IV from Micrurus frontalis (Coral snake).